The chain runs to 900 residues: Zinc finger protein 62 homolog (900 aa).

A disordered region spans residues M1–S97. K5 participates in a covalent cross-link: Glycyl lysine isopeptide (Lys-Gly) (interchain with G-Cter in SUMO2). Acidic residues predominate over residues E9–E18. Residues S47–S73 show a composition bias toward basic and acidic residues. Glycyl lysine isopeptide (Lys-Gly) (interchain with G-Cter in SUMO2) cross-links involve residues K48, K62, K65, K82, and K92. The span at T83–L94 shows a compositional bias: basic and acidic residues. 13 consecutive C2H2-type zinc fingers follow at residues C225 to H247, Y253 to H275, Y281 to H303, Y309 to H331, Y337 to H359, Y365 to H387, Y393 to H415, H421 to H443, Y449 to H471, Y477 to H499, Y505 to H527, F533 to H555, and Y561 to H583. K587 is covalently cross-linked (Glycyl lysine isopeptide (Lys-Gly) (interchain with G-Cter in SUMO2)). C2H2-type zinc fingers lie at residues F589–H611, Y617–H639, Y645–H667, Y673–H695, H701–H723, F729–H751, Y757–H779, Y785–H807, Y813–H834, and Y840–H862. K748 is covalently cross-linked (Glycyl lysine isopeptide (Lys-Gly) (interchain with G-Cter in SUMO2)). Residue K882 forms a Glycyl lysine isopeptide (Lys-Gly) (interchain with G-Cter in SUMO2) linkage.

Belongs to the krueppel C2H2-type zinc-finger protein family.

Its subcellular location is the nucleus. Its function is as follows. May play a role in differentiating skeletal muscle. The polypeptide is Zinc finger protein 62 homolog (ZFP62) (Homo sapiens (Human)).